The following is a 282-amino-acid chain: Parvulin-like PPIase (282 aa).

The first 20 residues, 1–20 (MKKLSVIFLSVSMLSGIAFA), serve as a signal peptide directing secretion. Residues 138-231 (KEQIKVAHIL…FGWHIIKVLE (94 aa)) form the PpiC domain.

Belongs to the PpiC/parvulin rotamase family.

Its subcellular location is the cell outer membrane. It carries out the reaction [protein]-peptidylproline (omega=180) = [protein]-peptidylproline (omega=0). The chain is Parvulin-like PPIase (plp) from Rickettsia felis (strain ATCC VR-1525 / URRWXCal2) (Rickettsia azadi).